The sequence spans 287 residues: Small ribosomal subunit biogenesis GTPase RsgA (287 aa).

One can recognise a CP-type G domain in the interval Ser-61–Leu-218. GTP-binding positions include Asn-110–Asp-113 and Gly-161–Thr-169. Positions 242, 247, 249, and 255 each coordinate Zn(2+).

It belongs to the TRAFAC class YlqF/YawG GTPase family. RsgA subfamily. As to quaternary structure, monomer. Associates with 30S ribosomal subunit, binds 16S rRNA. Requires Zn(2+) as cofactor.

Its subcellular location is the cytoplasm. Its function is as follows. One of several proteins that assist in the late maturation steps of the functional core of the 30S ribosomal subunit. Helps release RbfA from mature subunits. May play a role in the assembly of ribosomal proteins into the subunit. Circularly permuted GTPase that catalyzes slow GTP hydrolysis, GTPase activity is stimulated by the 30S ribosomal subunit. This chain is Small ribosomal subunit biogenesis GTPase RsgA, found in Clostridium perfringens (strain 13 / Type A).